The sequence spans 125 residues: Small ribosomal subunit protein uS12c (125 aa).

Belongs to the universal ribosomal protein uS12 family. Part of the 30S ribosomal subunit.

The protein localises to the plastid. Its function is as follows. With S4 and S5 plays an important role in translational accuracy. Located at the interface of the 30S and 50S subunits. This Euglena longa (Euglenophycean alga) protein is Small ribosomal subunit protein uS12c (rps12).